A 126-amino-acid chain; its full sequence is MASIEALVEEIGKLSLTEASELVKALEDKFGVSAAPAVFAGAAAAAPGGEAEAKEEQTEFDVELKAVGANKINVIKAVRSITGLGLKEAKEMVDGAPKVVKEAVSKEEAEKVAKELKDAGAEVELK.

It belongs to the bacterial ribosomal protein bL12 family. As to quaternary structure, homodimer. Part of the ribosomal stalk of the 50S ribosomal subunit. Forms a multimeric L10(L12)X complex, where L10 forms an elongated spine to which 2 to 4 L12 dimers bind in a sequential fashion. Binds GTP-bound translation factors.

Forms part of the ribosomal stalk which helps the ribosome interact with GTP-bound translation factors. Is thus essential for accurate translation. This chain is Large ribosomal subunit protein bL12, found in Chlorobium phaeobacteroides (strain BS1).